Here is a 531-residue protein sequence, read N- to C-terminus: DnaJ homolog subfamily C member 21 (531 aa).

A J domain is found at 3–69 (CHYEALGVRR…QERAWYDNHR (67 aa)). Disordered stretches follow at residues 279-311 (FGDG…AELY), 327-474 (KAMK…VPAE), and 502-531 (KATG…RKNR). The segment covering 281-311 (DGSDENEMEEHELKDEEDGKDSDEAEDAELY) has biased composition (acidic residues). S283 and S302 each carry phosphoserine. A C2H2-type 1 zinc finger spans residues 314-338 (LYCPACDKSFKTEKAMKNHEKSKKH). Acidic residues predominate over residues 364–375 (NPLDDNSEEEME). A Phosphoserine modification is found at S370. Basic residues predominate over residues 381-392 (KLSKKQKKKKQK). A compositionally biased stretch (polar residues) spans 393–403 (PAQNYDDNFNV). Basic and acidic residues predominate over residues 442–453 (KPCDDPKSEAKS). The span at 455–464 (PKPKGKKTKD) shows a compositional bias: basic residues. Residues 482 to 506 (ISCTTCHSEFPSRNKLFDHLKATGH) form a C2H2-type 2 zinc finger. S511 is modified (phosphoserine). Low complexity predominate over residues 511-522 (SSSSLNSATSSQ).

In terms of assembly, interacts with HSPA8, PA2G4 and ZNF622. In terms of tissue distribution, expressed in brain, placenta, kidney and pancreas.

The protein resides in the cytoplasm. It localises to the nucleus. Its subcellular location is the nucleolus. Its function is as follows. May act as a co-chaperone for HSP70. May play a role in ribosomal RNA (rRNA) biogenesis, possibly in the maturation of the 60S subunit. Binds the precursor 45S rRNA. In Homo sapiens (Human), this protein is DnaJ homolog subfamily C member 21 (DNAJC21).